Here is a 1016-residue protein sequence, read N- to C-terminus: MEKIDGKDQSSQGDEEKEPPKSYPYSVETPYGFHLDLDFLKYVDDIEKGHTIKRIPIHRRAKQAKFSTLPRNFSLPNSGDRTYAVPPQQNWSPVVPRKISLGTQEPSQPLPLGDLPQASVQGSELNYHRKALLAKDARQAEAGSLEDVGSGRPQLLRASSMPATLLQNQVPEEPSLTSGPSTLLALPLLQDEGSVCDGAFDPAEGLMGFQASAQSVDRELGELEPAIPEQVWEGAEPEEGDLKASSHLSQPGPSSAVQSVPMDLEEVEIEHHMREAELVLTPGSATPSPPPLPSPILENDLSLDEIELSISEIPPPPPIEVDVRSIGIRVTEESLGLLETDTSSISSLKNQVLALEDKLSGRTEELARVRAALEQQEEETKAREQRIQELECTVAHLEEKLSQERASEAPDRTDATVNTDPLQELTPRESHDKNIGVNLLNTPDPECRAPRAEKNGFPWVQNNHKQSYPSPEEPVLPPQLSLPRGPEQILASSLCSCLSMELRIEEEGSEQEGGQEEGAGGLSRAAGESSWSTRESAPVIREEATSELPGAERPGRPASSPQDATIGQYVKKIQELLHEQWNCLEHGYPELASAIKQPASKLSSIQNQLLSSLNLLLSAYSAQAPEPEPKETPAPPPSTPPPPPPPPPEISPSTSLKSIMKKKDYGFRAGGNGTKKNLQFVGVNGGYETTSSEETSGEDSSPEDLSDSETEKKQDCSESREDRDLHPSCEAGQGVPEGTRNSGHTSDRGEEVSHLRAERYKPSEEFLNACQTLSQHLPETGDTTKQLLRQSLNTISQEWFRVSSRKLSSPEAVAAYLLEVQPHSPYLLKLLVNLADRSGNTALHYSVSHSNFAIVKLLLDTGVCNVDHQNKAGYTAVMITPLASAETKEDMAVVWKLLREGNVNIQATQGGQTALMLGVSHDREDMVQALLSCQADVNLQDNDGSSALMLACHQGNADLVRLLLAHPACNSSLTDKAGRTALSLVLNSPAHVEIAELLRAHSEPGRSLGPKELQKN.

Disordered stretches follow at residues 1-26 (MEKI…YPYS), 70-91 (PRNF…QQNW), 235-259 (AEPE…AVQS), 401-485 (LSQE…LPRG), 506-563 (EEGS…SPQD), and 622-755 (AQAP…VSHL). 2 stretches are compositionally biased toward polar residues: residues 70–80 (PRNFSLPNSGD) and 246–258 (SHLS…SAVQ). The stretch at 346–409 (SSLKNQVLAL…KLSQERASEA (64 aa)) forms a coiled coil. Basic and acidic residues-rich tracts occupy residues 401-414 (LSQE…DRTD) and 445-454 (PECRAPRAEK). A compositionally biased stretch (polar residues) spans 460–469 (VQNNHKQSYP). A compositionally biased stretch (pro residues) spans 632-650 (TPAPPPSTPPPPPPPPPEI). Thr-639 is subject to Phosphothreonine. Residues 695–708 (TSGEDSSPEDLSDS) show a composition bias toward acidic residues. 2 stretches are compositionally biased toward basic and acidic residues: residues 709-727 (ETEK…DLHP) and 745-755 (TSDRGEEVSHL). ANK repeat units lie at residues 838 to 868 (SGNT…NVDH), 877 to 905 (VMIT…NVNI), 910 to 939 (GGQT…DVNL), 943 to 973 (DGSS…NSSL), and 977 to 1007 (AGRT…PGRS).

It is found in the cytoplasm. Functionally, may be involved in the control of cytoskeleton formation by regulating actin polymerization. The sequence is that of KN motif and ankyrin repeat domain-containing protein 4 (Kank4) from Mus musculus (Mouse).